We begin with the raw amino-acid sequence, 444 residues long: Aflatoxin biosynthesis regulatory protein (444 aa).

The segment at 1–26 (MVDHISPRASPGPIRSSQTRRARKLR) is disordered. Positions 29–56 (CTSCASSKVRCTKEKPACARCIERGLAC) form a DNA-binding region, zn(2)-C6 fungal-type. A disordered region spans residues 64–167 (MGRNPRAPSP…QGLGGDLAGQ (104 aa)). The span at 106-116 (TQAHTHAHSHP) shows a compositional bias: basic residues. Over residues 120-130 (PQSHPQSNQPP) the composition is skewed to low complexity. Over residues 136–149 (PNGSSSVSAIFSHQ) the composition is skewed to polar residues.

It localises to the nucleus. It functions in the pathway mycotoxin biosynthesis; aflatoxin biosynthesis. Its function is as follows. Involved in the regulation of aflatoxin biosynthesis. May have a role in nitrate assimilation and sclerotial morphogenesis. This is Aflatoxin biosynthesis regulatory protein (aflR) from Aspergillus parasiticus.